The following is a 448-amino-acid chain: MLHRYLPMTEEDKREMLKVIGVDSIDDLFADIPESVRFRGELNIKKAKSEPELFKELSALAEKNADTKKYTSFLGAGVYDHYIPVIVDHVISRSEFYTAYTPYQPEISQGELQAIFEFQTMICELTGMDVANSSMYDGGTALAEAMLLSAAHTKKKKVLLSKTVHPEYRDVVKTYAKGQRLCVVEIPFQNGVTDLEALKMEMDEEVACVIVQYPNFFGQIEPLKDIEPIAHSGKSMFVVASNPLALGILTPPGQFGADIVVGDAQPFGIPMQFGGPHCGYFAVKSALIRKIPGRLVGQTSDEEGRRGFVLTLQAREQHIRRDKATSNICSNQALNALAASVAMTALGKKGVKEMAAMNIQKAQYAKNELVKHGFHVPFPGPFFNEFVVRLEKPVAEVNKRLLEKGIIGGYDVGRDYPELQNHMLIAVTELRTKKEIDTFVKELGDCHA.

Belongs to the GcvP family. N-terminal subunit subfamily. The glycine cleavage system is composed of four proteins: P, T, L and H. In this organism, the P 'protein' is a heterodimer of two subunits.

The enzyme catalyses N(6)-[(R)-lipoyl]-L-lysyl-[glycine-cleavage complex H protein] + glycine + H(+) = N(6)-[(R)-S(8)-aminomethyldihydrolipoyl]-L-lysyl-[glycine-cleavage complex H protein] + CO2. Functionally, the glycine cleavage system catalyzes the degradation of glycine. The P protein binds the alpha-amino group of glycine through its pyridoxal phosphate cofactor; CO(2) is released and the remaining methylamine moiety is then transferred to the lipoamide cofactor of the H protein. This Geobacillus sp. (strain WCH70) protein is Probable glycine dehydrogenase (decarboxylating) subunit 1.